The sequence spans 269 residues: Thymidylate synthase (269 aa).

Arginine 21 contributes to the dUMP binding site. Histidine 51 provides a ligand contact to (6R)-5,10-methylene-5,6,7,8-tetrahydrofolate. 126–127 (RR) is a binding site for dUMP. The active-site Nucleophile is cysteine 146. DUMP contacts are provided by residues 171-174 (RSGD), asparagine 182, and 212-214 (HLY). (6R)-5,10-methylene-5,6,7,8-tetrahydrofolate is bound at residue aspartate 174. Alanine 268 contacts (6R)-5,10-methylene-5,6,7,8-tetrahydrofolate.

The protein belongs to the thymidylate synthase family. Bacterial-type ThyA subfamily. In terms of assembly, homodimer.

The protein resides in the cytoplasm. The enzyme catalyses dUMP + (6R)-5,10-methylene-5,6,7,8-tetrahydrofolate = 7,8-dihydrofolate + dTMP. The protein operates within pyrimidine metabolism; dTTP biosynthesis. Its function is as follows. Catalyzes the reductive methylation of 2'-deoxyuridine-5'-monophosphate (dUMP) to 2'-deoxythymidine-5'-monophosphate (dTMP) while utilizing 5,10-methylenetetrahydrofolate (mTHF) as the methyl donor and reductant in the reaction, yielding dihydrofolate (DHF) as a by-product. This enzymatic reaction provides an intracellular de novo source of dTMP, an essential precursor for DNA biosynthesis. The polypeptide is Thymidylate synthase (Methylocella silvestris (strain DSM 15510 / CIP 108128 / LMG 27833 / NCIMB 13906 / BL2)).